The chain runs to 392 residues: Protein SRL2 (392 aa).

Ser11 bears the Phosphoserine mark. The interval 18 to 52 (KPSETPKMEEEKLEVTNVNASSSKKVHKSKKSTSK) is disordered. Residues 21–31 (ETPKMEEEKLE) are compositionally biased toward basic and acidic residues. Residues 41–50 (KKVHKSKKST) show a composition bias toward basic residues. Position 139 is a phosphoserine (Ser139). The segment at 284–303 (EDSTAVTNENGHISSEKNLK) is disordered. Polar residues predominate over residues 287 to 296 (TAVTNENGHI).

It is found in the cytoplasm. It localises to the nucleus. This chain is Protein SRL2 (SRL2), found in Saccharomyces cerevisiae (strain ATCC 204508 / S288c) (Baker's yeast).